Consider the following 428-residue polypeptide: Probable mitochondrial adenine nucleotide transporter BTL3 (428 aa).

Solcar repeat units lie at residues 129-212, 222-307, and 336-421; these read LNTT…YRGQ, TTNF…LKSA, and LGPM…MKVV. Helical transmembrane passes span 132-152, 187-207, 228-248, 283-303, 342-362, and 390-410; these read TKHLWAGAFAAMVSRTCIAPL, GNLVNILRTAPFKSINFYAYD, FVAGAAAGVTASLLCLPLDTI, LVPSLVSMAPSGAVFYGVYDI, LLYGAIAGACSEAATYPFEVV, and VPALYAGLIPSLLQVLPSAAI.

This sequence belongs to the mitochondrial carrier (TC 2.A.29) family.

The protein resides in the mitochondrion inner membrane. Its function is as follows. Probable mitochondrial adenylate carrier that catalyzes the transport of ATP, ADP and AMP. The polypeptide is Probable mitochondrial adenine nucleotide transporter BTL3 (Arabidopsis thaliana (Mouse-ear cress)).